We begin with the raw amino-acid sequence, 363 residues long: Spermidine/putrescine import ATP-binding protein PotA (363 aa).

The ABC transporter domain maps to 9-239; sequence IDVRNAVKRY…PANRFVADFI (231 aa). ATP is bound at residue 41 to 48; sequence GPSGCGKT.

Belongs to the ABC transporter superfamily. Spermidine/putrescine importer (TC 3.A.1.11.1) family. As to quaternary structure, the complex is composed of two ATP-binding proteins (PotA), two transmembrane proteins (PotB and PotC) and a solute-binding protein (PotD).

The protein resides in the cell inner membrane. The enzyme catalyses ATP + H2O + polyamine-[polyamine-binding protein]Side 1 = ADP + phosphate + polyamineSide 2 + [polyamine-binding protein]Side 1.. Its function is as follows. Part of the ABC transporter complex PotABCD involved in spermidine/putrescine import. Responsible for energy coupling to the transport system. This Roseobacter denitrificans (strain ATCC 33942 / OCh 114) (Erythrobacter sp. (strain OCh 114)) protein is Spermidine/putrescine import ATP-binding protein PotA.